Here is a 964-residue protein sequence, read N- to C-terminus: Chromatin assembly factor 1 subunit A (964 aa).

A binds to PCNA region spans residues 1–49 (MLEEPECGAPGARGEAAAMDCKDRPAFPVKKLIQARLPFKRLNLVPKEK). A binds to CBX1 chromo shadow domain region spans residues 1 to 316 (MLEEPECGAP…LHTGPSPFPA (316 aa)). A phosphoserine mark is found at serine 126, serine 141, and serine 144. Positions 146–232 (AQKNINGVPD…KDRDGWSEAG (87 aa)) are disordered. A compositionally biased stretch (basic and acidic residues) spans 156–172 (KAGDDRGLPKARQKDEL). Lysine 185 is covalently cross-linked (Glycyl lysine isopeptide (Lys-Gly) (interchain with G-Cter in SUMO1); alternate). A Glycyl lysine isopeptide (Lys-Gly) (interchain with G-Cter in SUMO2); alternate cross-link involves residue lysine 185. A PxVxL motif motif is present at residues 236 to 249 (FKGKMPVVVLQDIL). Disordered regions lie at residues 253–437 (PPAR…REEE) and 601–641 (DSDE…VPHG). Low complexity predominate over residues 284–298 (LSHSSLSSSSPTSSP). Serine 312 is subject to Phosphoserine. A coiled-coil region spans residues 329 to 453 (RGSAEKNKMK…KAEITRFFQK (125 aa)). A compositionally biased stretch (basic and acidic residues) spans 331–437 (SAEKNKMKLQ…EEEKRLREEE (107 aa)). Composition is skewed to acidic residues over residues 601–612 (DSDEEWEEEEPG) and 620–635 (GDDDDDVGEDEDEDDG). The tract at residues 644 to 680 (SEDEGVTEECADPENHKVRQKLKAKEWDEFLAKGKRF) is necessary for homodimerization and competence for chromatin assembly. Residues 662 to 964 (RQKLKAKEWD…FVSPSSLRLS (303 aa)) form a binds to p60 region. Position 723 is a phosphothreonine (threonine 723). Residues 769–799 (RDAGSPEDSAASPPSPGPARPQTPTASEDVA) form a disordered region. Over residues 770-780 (DAGSPEDSAAS) the composition is skewed to low complexity. A phosphoserine mark is found at serine 773, serine 783, serine 811, serine 876, and serine 881. The segment at 859-878 (EDSGSVPAPGPGQGMPVSLK) is disordered. 2 disordered regions span residues 897–920 (DGQVGTGDLDDFQADTEEEDDDEG) and 933–964 (IQAPCGTTSGAGGSVGMDTSESFVSPSSLRLS). A compositionally biased stretch (acidic residues) spans 904-920 (DLDDFQADTEEEDDDEG). Over residues 949–964 (MDTSESFVSPSSLRLS) the composition is skewed to polar residues. A Phosphoserine modification is found at serine 959.

This sequence belongs to the CHAF1A family. Homodimer. Part of the CAF-1 complex that contains RBBP4, CHAF1B and CHAF1A. CHAF1A binds directly to CHAF1B. Only minor amounts of RBBP4 are complexed with CHAF1A and CHAF1B in G1 phase. Interacts with PCNA; the interaction is direct. Interacts (via the PxVxL motif) with CBX5; the interaction is direct. Interacts with MBD1. Interacts with histones H3.1, H3.2 and H3.1t.

Its subcellular location is the nucleus. In terms of biological role, acts as a component of the histone chaperone complex chromatin assembly factor 1 (CAF-1), which assembles histone octamers onto DNA during replication and repair. CAF-1 performs the first step of the nucleosome assembly process, bringing newly synthesized histones H3 and H4 to replicating DNA; histones H2A/H2B can bind to this chromatin precursor subsequent to DNA replication to complete the histone octamer. It may play a role in heterochromatin maintenance in proliferating cells by bringing newly synthesized cbx proteins to heterochromatic DNA replication foci. The sequence is that of Chromatin assembly factor 1 subunit A (CHAF1A) from Bos taurus (Bovine).